A 148-amino-acid polypeptide reads, in one-letter code: Deoxyuridine 5'-triphosphate nucleotidohydrolase (148 aa).

Substrate contacts are provided by residues 68-70, Asn-81, 85-87, and Lys-95; these read RSG and TID.

This sequence belongs to the dUTPase family. It depends on Mg(2+) as a cofactor.

It catalyses the reaction dUTP + H2O = dUMP + diphosphate + H(+). It participates in pyrimidine metabolism; dUMP biosynthesis; dUMP from dCTP (dUTP route): step 2/2. In terms of biological role, this enzyme is involved in nucleotide metabolism: it produces dUMP, the immediate precursor of thymidine nucleotides and it decreases the intracellular concentration of dUTP so that uracil cannot be incorporated into DNA. This Rickettsia canadensis (strain McKiel) protein is Deoxyuridine 5'-triphosphate nucleotidohydrolase.